The primary structure comprises 349 residues: MPPKRDGEVLVLGIESTAHTFGVGIVSTRPPIVRADVRRRWTPREGGILPREVAEFFSLHAGEAVAEALGEAGVSIADVDAVAVALGPGMGPALRVGATVARALSAKYGKPLVPVNHAVAHVEAARFTTGLRDPVALYVAGGNTTVVSFVAGRYRTFGETLDIALGNLLDTFAREAGIAPPYVAGGLHAVDRCAEGGGFVEGIPYVVKGQDVSFSGILTAALRLLKRGARLSDVCYTLREVAFSSVVEVTERCLAHTGKRQATLTGGVAANRVLNEKMSLMAGLHGAVYRPVDVRLSGDNGVMIALTGLAAYLHGVIIDPGEAYIRQRWRIDEVDIPWYPWLPGDPPPG.

Residues His117, His121, and Tyr138 each contribute to the Fe cation site. Substrate-binding positions include 138 to 142 (YVAGG), Asp170, Asp191, and Asn271. Residue Asp299 coordinates Fe cation.

The protein belongs to the KAE1 / TsaD family. It depends on Fe(2+) as a cofactor.

It localises to the cytoplasm. It catalyses the reaction L-threonylcarbamoyladenylate + adenosine(37) in tRNA = N(6)-L-threonylcarbamoyladenosine(37) in tRNA + AMP + H(+). Its function is as follows. Required for the formation of a threonylcarbamoyl group on adenosine at position 37 (t(6)A37) in tRNAs that read codons beginning with adenine. Is probably involved in the transfer of the threonylcarbamoyl moiety of threonylcarbamoyl-AMP (TC-AMP) to the N6 group of A37. The sequence is that of tRNA N6-adenosine threonylcarbamoyltransferase from Aeropyrum pernix (strain ATCC 700893 / DSM 11879 / JCM 9820 / NBRC 100138 / K1).